Reading from the N-terminus, the 373-residue chain is WAT1-related protein At4g30420 (373 aa).

10 helical membrane passes run 2–22 (AMTM…ATLV), 29–49 (VFIL…LYLS), 55–75 (IAIS…SLIG), 94–114 (MGSA…FLAG), 125–145 (GLAK…MTLL), 173–193 (WLIG…WLIL), 205–225 (LSLS…VTFF), 244–264 (CLYA…WAIA), 270–290 (FSAL…ALFF), and 294–314 (IYTG…TVLW). EamA domains follow at residues 9–135 (CYAG…TILC) and 186–313 (CWSF…YTVL).

It belongs to the drug/metabolite transporter (DMT) superfamily. Plant drug/metabolite exporter (P-DME) (TC 2.A.7.4) family.

The protein localises to the membrane. The protein is WAT1-related protein At4g30420 of Arabidopsis thaliana (Mouse-ear cress).